The chain runs to 92 residues: uncharacterized protein (92 aa).

The next 3 helical transmembrane spans lie at 1–21 (MNIYVWLFAIIALSFSALVGL), 30–50 (ANVLVGESIITVVAGTLIVVI), and 62–82 (IALAIFICGVVGAFAFCKVIG).

To M.thermoautotrophicum MTH1250.

Its subcellular location is the cell membrane. This is an uncharacterized protein from Methanocaldococcus jannaschii (strain ATCC 43067 / DSM 2661 / JAL-1 / JCM 10045 / NBRC 100440) (Methanococcus jannaschii).